The chain runs to 375 residues: Glutamate 5-kinase (375 aa).

An ATP-binding site is contributed by lysine 17. Substrate contacts are provided by serine 57, aspartate 144, and asparagine 156. 176 to 177 (TD) is an ATP binding site. A PUA domain is found at 283–361 (KGELILDTGA…DEIEGILGYV (79 aa)).

Belongs to the glutamate 5-kinase family.

It is found in the cytoplasm. The catalysed reaction is L-glutamate + ATP = L-glutamyl 5-phosphate + ADP. Its pathway is amino-acid biosynthesis; L-proline biosynthesis; L-glutamate 5-semialdehyde from L-glutamate: step 1/2. Functionally, catalyzes the transfer of a phosphate group to glutamate to form L-glutamate 5-phosphate. This Thioalkalivibrio sulfidiphilus (strain HL-EbGR7) protein is Glutamate 5-kinase.